The chain runs to 117 residues: Large ribosomal subunit protein bL19 (117 aa).

The protein belongs to the bacterial ribosomal protein bL19 family.

Functionally, this protein is located at the 30S-50S ribosomal subunit interface and may play a role in the structure and function of the aminoacyl-tRNA binding site. The chain is Large ribosomal subunit protein bL19 from Vibrio campbellii (strain ATCC BAA-1116).